Consider the following 141-residue polypeptide: Chorion protein S16 (141 aa).

Positions 1-22 are cleaved as a signal peptide; that stretch reads MSANNMRLLCLLLACYISAIVA.

The protein belongs to the chorion protein S16 family.

The protein resides in the secreted. In terms of biological role, chorion membrane (egg shell) protein; plays a role in protecting the egg from the environment. The sequence is that of Chorion protein S16 (Cp16) from Drosophila subobscura (Fruit fly).